A 638-amino-acid chain; its full sequence is Sodium- and chloride-dependent glycine transporter 1 (638 aa).

The segment at 1–30 (MAVAHGPVATSSPEQNGAVPSEATKKDQNL) is disordered. The Cytoplasmic portion of the chain corresponds to 1-40 (MAVAHGPVATSSPEQNGAVPSEATKKDQNLTRGNWGNQIE). A run of 3 helical transmembrane segments spans residues 41–61 (FVLT…FPYL), 68–88 (GAFM…LFFM), and 120–140 (VSTY…YYFF). Residues 141-217 (SSMTHVLPWA…LSDDIGDFGE (77 aa)) are Extracellular-facing. N-linked (GlcNAc...) asparagine glycans are attached at residues N169, N172, N182, and N188. The next 9 helical transmembrane spans lie at 218–238 (VRLP…LCLI), 247–267 (VVYF…VRGV), 292–312 (VWGD…GGLI), 339–359 (SVYA…HLGV), 382–402 (LLPI…LLGL), 438–458 (VAGF…WLLL), 462–482 (YAAS…IMYI), 502–522 (LFFQ…ILIF), and 542–562 (VAIG…YALF). The Cytoplasmic segment spans residues 563 to 638 (QLCRTDGDTL…GSSRLQDSRI (76 aa)). The residue at position 603 (T603) is a Phosphothreonine. Phosphoserine occurs at positions 605 and 630. The essential for interaction with EXOC1 stretch occupies residues 627-638 (SNGSSRLQDSRI).

This sequence belongs to the sodium:neurotransmitter symporter (SNF) (TC 2.A.22) family. SLC6A9 subfamily. In terms of assembly, interacts with EXOC1; interaction increases the transporter capacity of SLC6A9 probably by promoting its insertion into the cell membrane. Interacts with EXOC3 and EXOC4. As to expression, found only in the white matter of the CNS. In terms of tissue distribution, found in the gray matter of CNS as well as in macrophages and mast cells in peripheral tissues.

It localises to the cell membrane. The enzyme catalyses glycine(out) + chloride(out) + 2 Na(+)(out) = glycine(in) + chloride(in) + 2 Na(+)(in). Its activity is regulated as follows. Inhibited by sarcosine. Its function is as follows. Sodium- and chloride-dependent glycine transporter. Essential for regulating glycine concentrations at inhibitory glycinergic synapses. This is Sodium- and chloride-dependent glycine transporter 1 (Slc6a9) from Rattus norvegicus (Rat).